A 2210-amino-acid polypeptide reads, in one-letter code: Genome polyprotein (2210 aa).

Residues 1–24 (MAPVVSRDQCKPKTPKPHRPAPPH) form a disordered region. Positions 13–22 (KTPKPHRPAP) are enriched in basic residues. The region spanning 426 to 585 (SNKIVELSTM…ADFLRQHPGV (160 aa)) is the SF3 helicase domain. Residue 456–463 (GPPGHGKS) participates in ATP binding. Tyr940 bears the O-(5'-phospho-RNA)-tyrosine mark. The Peptidase C24 domain maps to 991–1136 (GNNCDDIPLH…KVITPITPEP (146 aa)). Active-site for 3CLpro activity residues include His1025, Asp1039, and Cys1103. The 123-residue stretch at 1379-1501 (DHCLELDYSK…TIPSHLTKSI (123 aa)) folds into the RdRp catalytic domain. Residues 1656–1685 (LIREGNMSDNKSIPEQQHESSRAMDAGATG) are disordered.

Post-translationally, specific enzymatic cleavages by its own cysteine protease yield mature proteins. The protease cleaves itself from the nascent polyprotein autocatalytically. Precursor p41 can be cleaved by viral 3CLpro into protein p19 and VPg, or cleaved by host protease into protein p23/2 and protein p18. VPg is uridylylated by the polymerase and is covalently attached to the 5'-end of the polyadenylated genomic and subgenomic RNAs. This uridylylated form acts as a nucleotide-peptide primer for the polymerase.

The protein localises to the virion. The protein resides in the host cytoplasm. The catalysed reaction is a ribonucleoside 5'-triphosphate + H2O = a ribonucleoside 5'-diphosphate + phosphate + H(+). It carries out the reaction Endopeptidase with a preference for cleavage when the P1 position is occupied by Glu-|-Xaa and the P1' position is occupied by Gly-|-Yaa.. The enzyme catalyses RNA(n) + a ribonucleoside 5'-triphosphate = RNA(n+1) + diphosphate. Functionally, displays NTPase activity, but no helicase activity. Induces the formation of convoluted membranes derived from the host ER. These remodeled membranes probably form the viral factories that contain the replication complex. Together with NS2 and NS4, initiates the formation of the replication complex. Viral genome-linked protein is covalently linked to the 5'-end of the positive-strand, negative-strand genomic RNAs and subgenomic RNA. Acts as a genome-linked replication primer. May recruit ribosome to viral RNA thereby promoting viral proteins translation. Interacts with host translation initiation complex to allow the translation of viral proteins. In terms of biological role, processes the polyprotein. 3CLpro-RdRp is first released by autocleavage, then all other proteins are cleaved. May cleave polyadenylate-binding protein thereby inhibiting cellular translation. Its function is as follows. Replicates genomic and antigenomic RNA by recognizing replications specific signals. Also transcribes a subgenomic mRNA by initiating RNA synthesis internally on antigenomic RNA. This sgRNA codes for structural proteins. Catalyzes the covalent attachment VPg with viral RNAs. Functionally, capsid protein self assembles to form an icosahedral capsid with a T=3 symmetry, about 35 nm in diameter, and consisting of 180 capsid proteins. A smaller form of capsid with a diameter of 23 nm might be capsid proteins assembled as icosahedron with T=1 symmetry. The capsid encapsulate VP2 proteins and genomic or subgenomic RNA. Attaches virion to target cells by binding histo-blood group antigens, inducing endocytosis of the viral particle. Acidification of the endosome induces conformational change of capsid protein thereby injecting virus genomic RNA into host cytoplasm. In Bovine enteric calicivirus NB (isolate Bovine/United States/N ebraska/1980) (BEC-NB), this protein is Genome polyprotein.